A 445-amino-acid polypeptide reads, in one-letter code: MAAQASEDLQKLDLNGQGGAAKADAPTAGQAEAGEAEDDSDDDADEGNAAPEGGANGAAKKKKKRKSKKKKKGGAKVQSEPPRVPLSQLFAGKQYPEGEIVEYKDDNLYRTTNEEKRYLDRMNNDFLQEYRQGAEVHRQVRQYAQKTIKPGQTLTEIAEGIEESVRALTGHQGLEEGDNLKGGMGFPCGLSINHCAAHYTPNAGNKMVLQQGDVMKVDFGAHINGRIVDSAFTVAFDPVYDPLLEAVKDATNTGIREAGIDVRMSDIGAAIQEAMESYEVELNGTMHPVKCIRNLNGHNIDQHVIHGGKSVPIVKGGDQTKMEEGEVFAIETFGSTGKGYVREDMETSHYALVPNASPVPLRLSSAKNLLNVINKNFGTLPFCRRYLDRLGQDKYLLGLNNLVSSGIVQDYPPLCDIKGSYTAQYEHTIVLRPNVKEVISRGDDY.

The tract at residues 1–86 (MAAQASEDLQ…VQSEPPRVPL (86 aa)) is disordered. Over residues 34–46 (GEAEDDSDDDADE) the composition is skewed to acidic residues. Basic residues predominate over residues 59–74 (AKKKKKRKSKKKKKGG). Residue H198 participates in substrate binding. Residues D218, D229, and H298 each contribute to the a divalent metal cation site. H306 contacts substrate. Residues E331 and E426 each coordinate a divalent metal cation.

This sequence belongs to the peptidase M24A family. Methionine aminopeptidase eukaryotic type 2 subfamily. Requires Co(2+) as cofactor. Zn(2+) is required as a cofactor. Mn(2+) serves as cofactor. The cofactor is Fe(2+).

It is found in the cytoplasm. It carries out the reaction Release of N-terminal amino acids, preferentially methionine, from peptides and arylamides.. Cotranslationally removes the N-terminal methionine from nascent proteins. The N-terminal methionine is often cleaved when the second residue in the primary sequence is small and uncharged (Met-Ala-, Cys, Gly, Pro, Ser, Thr, or Val). The sequence is that of Methionine aminopeptidase 2-1 from Aspergillus flavus (strain ATCC 200026 / FGSC A1120 / IAM 13836 / NRRL 3357 / JCM 12722 / SRRC 167).